A 502-amino-acid polypeptide reads, in one-letter code: Glycerol kinase (502 aa).

Thr14 lines the ADP pocket. ATP-binding residues include Thr14, Thr15, and Ser16. Residue Thr14 participates in sn-glycerol 3-phosphate binding. An ADP-binding site is contributed by Arg18. The sn-glycerol 3-phosphate site is built by Arg84, Glu85, Tyr136, and Asp246. Glycerol is bound by residues Arg84, Glu85, Tyr136, Asp246, and Gln247. ADP is bound by residues Thr268 and Gly311. 4 residues coordinate ATP: Thr268, Gly311, Gln315, and Gly412. 2 residues coordinate ADP: Gly412 and Asn416.

The protein belongs to the FGGY kinase family. As to quaternary structure, homotetramer and homodimer (in equilibrium). Heterodimer with EIIA-Glc. Binds 1 zinc ion per glycerol kinase EIIA-Glc dimer. The zinc ion is important for dimerization.

The enzyme catalyses glycerol + ATP = sn-glycerol 3-phosphate + ADP + H(+). Its pathway is polyol metabolism; glycerol degradation via glycerol kinase pathway; sn-glycerol 3-phosphate from glycerol: step 1/1. Its activity is regulated as follows. Activity of this regulatory enzyme is affected by several metabolites. Allosterically and non-competitively inhibited by fructose 1,6-bisphosphate (FBP) and unphosphorylated phosphocarrier protein EIIA-Glc (III-Glc), an integral component of the bacterial phosphotransferase (PTS) system. In terms of biological role, key enzyme in the regulation of glycerol uptake and metabolism. Catalyzes the phosphorylation of glycerol to yield sn-glycerol 3-phosphate. The protein is Glycerol kinase of Salmonella typhimurium (strain LT2 / SGSC1412 / ATCC 700720).